A 216-amino-acid polypeptide reads, in one-letter code: Uracil phosphoribosyltransferase (216 aa).

Residues arginine 32, arginine 41, 75-78 (MGKI), and lysine 77 contribute to the GTP site. Serine 82 is subject to Phosphoserine. Position 85 (arginine 85) interacts with 5-phospho-alpha-D-ribose 1-diphosphate. Residue arginine 102 coordinates GTP. Residue arginine 110 coordinates 5-phospho-alpha-D-ribose 1-diphosphate. Arginine 131 provides a ligand contact to GTP. 5-phospho-alpha-D-ribose 1-diphosphate contacts are provided by residues aspartate 137 and 137–145 (DPMLATGGS). Residue tyrosine 201 coordinates D-ribose 5-phosphate. Uracil is bound by residues leucine 202 and 207–209 (GDF). A 5-phospho-alpha-D-ribose 1-diphosphate-binding site is contributed by aspartate 208.

The protein belongs to the UPRTase family. Mg(2+) is required as a cofactor.

The catalysed reaction is UMP + diphosphate = 5-phospho-alpha-D-ribose 1-diphosphate + uracil. It participates in pyrimidine metabolism; UMP biosynthesis via salvage pathway; UMP from uracil: step 1/1. Allosterically activated by GTP. Its function is as follows. Catalyzes the conversion of uracil and 5-phospho-alpha-D-ribose 1-diphosphate (PRPP) to UMP and diphosphate in the pyrimidine salvage pathway. The chain is Uracil phosphoribosyltransferase (FUR1) from Saccharomyces cerevisiae (strain ATCC 204508 / S288c) (Baker's yeast).